The sequence spans 615 residues: Medium-chain acyl-CoA ligase ACSF2, mitochondrial (615 aa).

A mitochondrion-targeting transit peptide spans 1 to 41 (MAVYVGMLRLGRLCAGSSGVLGARAALSRSWQEARLQGVRF). An N6-acetyllysine modification is found at Lys-179. At Lys-182 the chain carries N6-acetyllysine; alternate. Lys-182 is modified (N6-succinyllysine; alternate). 263–271 (TSGTTGSPK) provides a ligand contact to ATP. Residues Lys-340 and Lys-398 each carry the N6-acetyllysine modification. The residue at position 478 (Lys-478) is an N6-succinyllysine. Residues Asp-493 and Arg-508 each coordinate ATP. Residue Lys-510 is modified to N6-acetyllysine. 2 positions are modified to N6-acetyllysine; alternate: Lys-544 and Lys-570. Residues Lys-544 and Lys-570 each carry the N6-succinyllysine; alternate modification. Lys-599 is a binding site for ATP. Lys-599 is subject to N6-succinyllysine.

Belongs to the ATP-dependent AMP-binding enzyme family.

The protein localises to the mitochondrion. It carries out the reaction a medium-chain fatty acid + ATP + CoA = a medium-chain fatty acyl-CoA + AMP + diphosphate. It catalyses the reaction octanoate + ATP + CoA = octanoyl-CoA + AMP + diphosphate. Its function is as follows. Acyl-CoA synthases catalyze the initial reaction in fatty acid metabolism, by forming a thioester with CoA. Has some preference toward medium-chain substrates. Plays a role in adipocyte differentiation. In Homo sapiens (Human), this protein is Medium-chain acyl-CoA ligase ACSF2, mitochondrial.